Here is a 367-residue protein sequence, read N- to C-terminus: MQTLKVELGERSYPIHIGEGLLDQPELLTPHIVGRQVAIVSNTTVAPLYLERLTQTLAGYNVLPIVLPDGEAFKNWETLQTIFDGLLTARHDRRTTVIALGGGVIGDMAGFAAACYQRGVNFIQIPTTLLSQVDSSVGGKTGINHPLGKNMVGAFYQPSVVLIDTTSLNTLPERELSAGLAEVIKYGLICDEPFLTWLEEHVDALRGLDQAALTVAIERSCAAKALVVGADERESGVRATLNLGHTFGHAIETHMGYGVWLHGEAVAAGTVMALEMSSRLGWISTQDRDRGIRLFQRAGLPVVPPQDMTEDNFLEHMAIDKKVIDGRLRLVLLRQMGEAVITDDYPKEVLQATLVADYRALVDQLRG.

Residues aspartate 69–lysine 74, glycine 103–aspartate 107, threonine 127–threonine 128, lysine 140, and lysine 149 each bind NAD(+). 3 residues coordinate Zn(2+): glutamate 182, histidine 245, and histidine 262.

The protein belongs to the sugar phosphate cyclases superfamily. Dehydroquinate synthase family. The cofactor is Co(2+). Requires Zn(2+) as cofactor. NAD(+) is required as a cofactor.

It is found in the cytoplasm. It carries out the reaction 7-phospho-2-dehydro-3-deoxy-D-arabino-heptonate = 3-dehydroquinate + phosphate. It functions in the pathway metabolic intermediate biosynthesis; chorismate biosynthesis; chorismate from D-erythrose 4-phosphate and phosphoenolpyruvate: step 2/7. Functionally, catalyzes the conversion of 3-deoxy-D-arabino-heptulosonate 7-phosphate (DAHP) to dehydroquinate (DHQ). The polypeptide is 3-dehydroquinate synthase (Pseudomonas savastanoi pv. phaseolicola (strain 1448A / Race 6) (Pseudomonas syringae pv. phaseolicola (strain 1448A / Race 6))).